Consider the following 199-residue polypeptide: V-type ATP synthase subunit E (199 aa).

Belongs to the V-ATPase E subunit family.

In terms of biological role, produces ATP from ADP in the presence of a proton gradient across the membrane. The chain is V-type ATP synthase subunit E (atpE) from Borreliella burgdorferi (strain ATCC 35210 / DSM 4680 / CIP 102532 / B31) (Borrelia burgdorferi).